The primary structure comprises 101 residues: Small ribosomal subunit protein uS14 (101 aa).

A compositionally biased stretch (basic and acidic residues) spans 1-11 (MAKKSAIETNE). The disordered stretch occupies residues 1 to 24 (MAKKSAIETNERRRKLSQSKAAKR). The span at 12 to 24 (RRRKLSQSKAAKR) shows a compositional bias: basic residues.

It belongs to the universal ribosomal protein uS14 family. As to quaternary structure, part of the 30S ribosomal subunit. Contacts proteins S3 and S10.

Binds 16S rRNA, required for the assembly of 30S particles and may also be responsible for determining the conformation of the 16S rRNA at the A site. This chain is Small ribosomal subunit protein uS14, found in Azorhizobium caulinodans (strain ATCC 43989 / DSM 5975 / JCM 20966 / LMG 6465 / NBRC 14845 / NCIMB 13405 / ORS 571).